A 199-amino-acid polypeptide reads, in one-letter code: GTP cyclohydrolase-2 (199 aa).

52-56 (RMHSE) contributes to the GTP binding site. 3 residues coordinate Zn(2+): Cys57, Cys68, and Cys70. Residues Gln73, 94–96 (EGR), and Thr116 each bind GTP. Residue Asp128 is the Proton acceptor of the active site. The Nucleophile role is filled by Arg130. GTP is bound by residues Thr151 and Lys156.

The protein belongs to the GTP cyclohydrolase II family. Zn(2+) serves as cofactor.

The enzyme catalyses GTP + 4 H2O = 2,5-diamino-6-hydroxy-4-(5-phosphoribosylamino)-pyrimidine + formate + 2 phosphate + 3 H(+). Its pathway is cofactor biosynthesis; riboflavin biosynthesis; 5-amino-6-(D-ribitylamino)uracil from GTP: step 1/4. Functionally, catalyzes the conversion of GTP to 2,5-diamino-6-ribosylamino-4(3H)-pyrimidinone 5'-phosphate (DARP), formate and pyrophosphate. The polypeptide is GTP cyclohydrolase-2 (Aliivibrio fischeri (strain MJ11) (Vibrio fischeri)).